A 384-amino-acid polypeptide reads, in one-letter code: Intraflagellar transport protein 46 homolog (384 aa).

Disordered regions lie at residues 52-151 (VNAE…PADY) and 358-384 (SATD…LTLD). A compositionally biased stretch (basic and acidic residues) spans 87-99 (EKLEEDTKRKKEP). Residues 110-138 (DEEEDEDDDDDDDDDDSDDTESDEEEEEP) are compositionally biased toward acidic residues. The span at 358–374 (SATDGQKSDTPPASRSA) shows a compositional bias: polar residues.

Belongs to the IFT46 family.

It is found in the cytoplasm. Its subcellular location is the cytoskeleton. The protein localises to the cilium basal body. The protein resides in the cell projection. It localises to the cilium. Forms part of a complex involved in intraflagellar transport (IFT), the bi-directional movement of particles required for the assembly, maintenance and functioning of primary cilia. Plays a role in early embryonic development. This is Intraflagellar transport protein 46 homolog from Danio rerio (Zebrafish).